Consider the following 917-residue polypeptide: Methionine--tRNA ligase, cytoplasmic (917 aa).

The 'HIGH' region motif lies at 44–54 (PYVNNVPHLGN). Positions 367–371 (KFSKS) match the 'KMSKS' region motif. An ATP-binding site is contributed by Lys-370. Disordered regions lie at residues 591-623 (GSQD…GDKK) and 702-749 (SCTP…AAAA). A compositionally biased stretch (basic and acidic residues) spans 614–623 (PTKDKKGDKK). Positions 702–713 (SCTPTPTSTPAS) are enriched in low complexity. The span at 732–741 (EPKKAKEQKK) shows a compositional bias: basic and acidic residues. One can recognise a tRNA-binding domain in the interval 756-857 (DVGRLDMRVG…ADSKPGTPVV (102 aa)).

Belongs to the class-I aminoacyl-tRNA synthetase family.

It localises to the cytoplasm. It carries out the reaction tRNA(Met) + L-methionine + ATP = L-methionyl-tRNA(Met) + AMP + diphosphate. In Caenorhabditis elegans, this protein is Methionine--tRNA ligase, cytoplasmic.